A 379-amino-acid chain; its full sequence is Elongation factor Ts, mitochondrial (379 aa).

The N-terminal 33 residues, 1–33, are a transit peptide targeting the mitochondrion; that stretch reads MAWGQGAKRSILGLLFRSQHQTARAYSSSAFQT.

This sequence belongs to the EF-Ts family.

Its subcellular location is the mitochondrion. Functionally, associates with the EF-Tu.GDP complex and induces the exchange of GDP to GTP. It remains bound to the aminoacyl-tRNA.EF-Tu.GTP complex up to the GTP hydrolysis stage on the ribosome. The polypeptide is Elongation factor Ts, mitochondrial (Zea mays (Maize)).